We begin with the raw amino-acid sequence, 538 residues long: Mitochondria-eating protein (538 aa).

Positions 1–273 (MAENLKRLVS…PRSRSCSRSR (273 aa)) are interaction with YWHAG/14-3-3 protein gamma. Ser-85 is subject to Phosphoserine. Positions 97–137 (SKVPSLQDTFDRERHKDPSPRDRDMQQLDSNLNSTRSQCNQ) are disordered. The span at 105–122 (TFDRERHKDPSPRDRDMQ) shows a compositional bias: basic and acidic residues. Coiled coils occupy residues 118–187 (DRDM…RHRN) and 219–256 (DQQDTEAMSDYKKQLRNLKEEIAVLSAEKSALQGRSSR). The segment covering 123-137 (QLDSNLNSTRSQCNQ) has biased composition (polar residues). A phosphoserine mark is found at Ser-156 and Ser-159. Disordered stretches follow at residues 173–226 (QLKS…TEAM) and 247–294 (KSAL…SKLS). Basic and acidic residues predominate over residues 181-210 (EDARHRNTDQRSSENRRSEPWSLEERKREQ). Residues 211 to 224 (WNSLKQNADQQDTE) show a composition bias toward polar residues. Residues 253 to 278 (RSSRSRSPSPAPRSRSCSRSRSASPS) show a composition bias toward low complexity. Phosphoserine occurs at positions 287 and 509.

It belongs to the MIEAP family. Interacts (via coiled-coil domains) with BNIP3L (via BH3 domain). Interacts (via coiled-coil domains) with BNIP3 (via BH3 domain). In terms of assembly, interacts with YWHAG/14-3-3 protein gamma; a protein that also plays a role in MALM.

The protein localises to the cytoplasm. Its subcellular location is the cytosol. It is found in the mitochondrion outer membrane. It localises to the mitochondrion matrix. In terms of biological role, key regulator of mitochondrial quality that mediates the repairing or degradation of unhealthy mitochondria in response to mitochondrial damage. Mediator of mitochondrial protein catabolic process (also named MALM) by mediating the degradation of damaged proteins inside mitochondria by promoting the accumulation in the mitochondrial matrix of hydrolases that are characteristic of the lysosomal lumen. Also involved in mitochondrion degradation of damaged mitochondria by promoting the formation of vacuole-like structures (named MIV), which engulf and degrade unhealthy mitochondria by accumulating lysosomes. The physical interaction of SPATA18/MIEAP, BNIP3 and BNIP3L/NIX at the mitochondrial outer membrane regulates the opening of a pore in the mitochondrial double membrane in order to mediate the translocation of lysosomal proteins from the cytoplasm to the mitochondrial matrix. Binds cardiolipin. May form molecular condensates (non-membrane-bounded organelles) within mitochondria that compartmentalize and promote cardiolipin metabolism. This Homo sapiens (Human) protein is Mitochondria-eating protein (SPATA18).